The sequence spans 200 residues: MPLTNVIYCGVCDFPAEYCEFSGKFKRCKAWLQENHPELYTKWYGDVTEDVSKQLAESSIGDEREEKLEKALEKLERKQQAREERELAKKLSSKVVIRREARTKRKCMIAISGLEVFEIDMKKLSKTFASKFATGCSISKNAEKKEEVIVQGDLADEVEAYIHSLLEEKGMKEVKVEVIDAAKKKKKAETTTTPGSENKK.

In terms of domain architecture, SUI1 spans 95-166 (VVIRREARTK…EVEAYIHSLL (72 aa)).

This sequence belongs to the DENR family. As to quaternary structure, interacts with the 40S ribosomal subunit.

It is found in the cytoplasm. This Kluyveromyces lactis (strain ATCC 8585 / CBS 2359 / DSM 70799 / NBRC 1267 / NRRL Y-1140 / WM37) (Yeast) protein is Translation machinery-associated protein 22 (TMA22).